A 197-amino-acid chain; its full sequence is Shikimate kinase (197 aa).

An ATP-binding site is contributed by 14–19 (GSGKST). Mg(2+) is bound at residue Ser-18. The substrate site is built by Asp-36, Arg-60, and Gly-82. Arg-120 is a binding site for ATP. Arg-147 serves as a coordination point for substrate.

It belongs to the shikimate kinase family. In terms of assembly, monomer. It depends on Mg(2+) as a cofactor.

It localises to the cytoplasm. It catalyses the reaction shikimate + ATP = 3-phosphoshikimate + ADP + H(+). It functions in the pathway metabolic intermediate biosynthesis; chorismate biosynthesis; chorismate from D-erythrose 4-phosphate and phosphoenolpyruvate: step 5/7. Functionally, catalyzes the specific phosphorylation of the 3-hydroxyl group of shikimic acid using ATP as a cosubstrate. This chain is Shikimate kinase, found in Prosthecochloris aestuarii (strain DSM 271 / SK 413).